The following is a 902-amino-acid chain: Proline-rich transmembrane protein 4 (902 aa).

An N-terminal signal peptide occupies residues 1-18 (MAGRGCLELGLFCWVLLA). Disordered stretches follow at residues 120–149 (FTPWASSLPPESTSPLSGPTKRPTAPSQPR) and 262–337 (PPPL…SGQP). Over residues 125 to 139 (SSLPPESTSPLSGPT) the composition is skewed to low complexity. Residues 271–301 (SSPSPLDSVASPSSASIKTTPVQHDPTVSTS) are compositionally biased toward polar residues. 5 consecutive transmembrane segments (helical) span residues 371–391 (AGALFGLVALLALLSLALLPW), 393–413 (CPPGAPCLALLDLLLLSAGTT), 431–451 (ALAWLLLQDLPLPCLAAGLGL), 465–485 (PIGLAALLLLGLGLAAAAALG), and 501–521 (GLHAFLAAFLSGLLLALSCWG). Ser-642 carries the phosphoserine modification. 3 disordered regions span residues 700–721 (GARANTTQSPASSPSSDCTVDF), 771–811 (KTGA…SLCG), and 836–872 (VLSPPRPSESSPSLPASGSYQALSPPSRDSPEHASEL). The span at 703 to 717 (ANTTQSPASSPSSDC) shows a compositional bias: polar residues. A compositionally biased stretch (pro residues) spans 786 to 798 (SPAPPELPSPGAW). 2 stretches are compositionally biased toward low complexity: residues 799 to 811 (PPGSSASSGSLCG) and 843 to 854 (SESSPSLPASGS).

It localises to the membrane. The protein is Proline-rich transmembrane protein 4 (Prrt4) of Rattus norvegicus (Rat).